A 73-amino-acid polypeptide reads, in one-letter code: Ferredoxin-thioredoxin reductase, variable chain (73 aa).

Residues 43–46 form an interaction with ferredoxin region; sequence NGKP.

This sequence belongs to the ferredoxin thioredoxin reductase alpha subunit family. As to quaternary structure, heterodimer of subunit A (variable subunit) and subunit B (catalytic subunit). Heterodimeric FTR forms a complex with ferredoxin and thioredoxin.

Variable subunit of the ferredoxin-thioredoxin reductase (FTR), which catalyzes the two-electron reduction of thioredoxins by the electrons provided by reduced ferredoxin. The chain is Ferredoxin-thioredoxin reductase, variable chain (ftrV) from Synechococcus sp. (strain ATCC 27144 / PCC 6301 / SAUG 1402/1) (Anacystis nidulans).